The following is a 488-amino-acid chain: Membrane-bound lytic murein transglycosylase F (488 aa).

The first 25 residues, 1 to 25, serve as a signal peptide directing secretion; sequence MFARPAIRMRCATGLLAIGTLLMLA. The interval 26-269 is non-LT domain; sequence GCGEEPKPSV…RLKERYYGHV (244 aa). The interval 270 to 488 is LT domain; it reads DVLGYVGAYT…RTLDEQTPPL (219 aa). Glu316 is a catalytic residue.

In the N-terminal section; belongs to the bacterial solute-binding protein 3 family. The protein in the C-terminal section; belongs to the transglycosylase Slt family.

The protein resides in the cell outer membrane. It carries out the reaction Exolytic cleavage of the (1-&gt;4)-beta-glycosidic linkage between N-acetylmuramic acid (MurNAc) and N-acetylglucosamine (GlcNAc) residues in peptidoglycan, from either the reducing or the non-reducing ends of the peptidoglycan chains, with concomitant formation of a 1,6-anhydrobond in the MurNAc residue.. Murein-degrading enzyme that degrades murein glycan strands and insoluble, high-molecular weight murein sacculi, with the concomitant formation of a 1,6-anhydromuramoyl product. Lytic transglycosylases (LTs) play an integral role in the metabolism of the peptidoglycan (PG) sacculus. Their lytic action creates space within the PG sacculus to allow for its expansion as well as for the insertion of various structures such as secretion systems and flagella. The sequence is that of Membrane-bound lytic murein transglycosylase F from Ectopseudomonas mendocina (strain ymp) (Pseudomonas mendocina).